The following is a 342-amino-acid chain: Serpentine receptor class gamma-69 (342 aa).

7 helical membrane passes run 11–31 (MAGL…SVVV), 51–71 (SLLY…HFLI), 106–126 (PIAI…IVAA), 140–160 (LFVL…IPCK), 191–211 (IAAV…LIAL), 222–242 (AEIS…IYAF), and 269–289 (FAID…STTV).

Belongs to the nematode receptor-like protein srg family.

It is found in the membrane. In Caenorhabditis elegans, this protein is Serpentine receptor class gamma-69 (srg-69).